Here is a 254-residue protein sequence, read N- to C-terminus: uncharacterized protein (254 aa).

Valine 7 and asparagine 85 together coordinate NADP(+). Serine 136 (proton donor) is an active-site residue. 4 residues coordinate NADP(+): tyrosine 150, lysine 154, valine 181, and threonine 183. Residue tyrosine 150 is the Proton acceptor of the active site. Lysine 154 acts as the Lowers pKa of active site Tyr in catalysis.

It belongs to the short-chain dehydrogenases/reductases (SDR) family.

This is an uncharacterized protein from Saccharomyces cerevisiae (strain ATCC 204508 / S288c) (Baker's yeast).